Consider the following 341-residue polypeptide: Ribosomal RNA small subunit methyltransferase H (341 aa).

S-adenosyl-L-methionine contacts are provided by residues 47–49 (GGY), Asp-64, Phe-91, Asp-109, and Gln-116.

The protein belongs to the methyltransferase superfamily. RsmH family.

It localises to the cytoplasm. The catalysed reaction is cytidine(1402) in 16S rRNA + S-adenosyl-L-methionine = N(4)-methylcytidine(1402) in 16S rRNA + S-adenosyl-L-homocysteine + H(+). Its function is as follows. Specifically methylates the N4 position of cytidine in position 1402 (C1402) of 16S rRNA. This is Ribosomal RNA small subunit methyltransferase H from Sinorhizobium medicae (strain WSM419) (Ensifer medicae).